The following is a 288-amino-acid chain: Aminoglycoside 6-adenylyltransferase (288 aa).

The catalysed reaction is streptomycin + ATP = 6-O-adenylylstreptomycin + diphosphate. Its function is as follows. Mediates bacterial resistance to streptomycin, is probably a streptomycin 6-adenylyltransferase. The chain is Aminoglycoside 6-adenylyltransferase from Campylobacter jejuni.